A 125-amino-acid chain; its full sequence is MADLAKIVDDLSSLTVLEAAELSKLLEEKWGVSAAAPVAVAAAAGGAGPAVVEEEKTEFDVILVEAGANKINVIKEVRAITGLGLKEAKDLVEGAPKAVKEGVNKAEAADIKKKLEDAGAKADVK.

It belongs to the bacterial ribosomal protein bL12 family. In terms of assembly, homodimer. Part of the ribosomal stalk of the 50S ribosomal subunit. Forms a multimeric L10(L12)X complex, where L10 forms an elongated spine to which 2 to 4 L12 dimers bind in a sequential fashion. Binds GTP-bound translation factors.

Forms part of the ribosomal stalk which helps the ribosome interact with GTP-bound translation factors. Is thus essential for accurate translation. The protein is Large ribosomal subunit protein bL12 of Rhizobium leguminosarum bv. trifolii (strain WSM2304).